The following is a 291-amino-acid chain: 2-C-methyl-D-erythritol 4-phosphate cytidylyltransferase (291 aa).

A disordered region spans residues 1 to 23 (MTERDFDTPVETPTVQPAPAQGT).

The protein belongs to the IspD/TarI cytidylyltransferase family. IspD subfamily.

It carries out the reaction 2-C-methyl-D-erythritol 4-phosphate + CTP + H(+) = 4-CDP-2-C-methyl-D-erythritol + diphosphate. Its pathway is isoprenoid biosynthesis; isopentenyl diphosphate biosynthesis via DXP pathway; isopentenyl diphosphate from 1-deoxy-D-xylulose 5-phosphate: step 2/6. Catalyzes the formation of 4-diphosphocytidyl-2-C-methyl-D-erythritol from CTP and 2-C-methyl-D-erythritol 4-phosphate (MEP). The protein is 2-C-methyl-D-erythritol 4-phosphate cytidylyltransferase of Bifidobacterium longum subsp. infantis (strain ATCC 15697 / DSM 20088 / JCM 1222 / NCTC 11817 / S12).